The primary structure comprises 181 residues: Peptide deformylase 1 (181 aa).

Fe cation-binding residues include Cys-106 and His-148. Glu-149 is a catalytic residue. Fe cation is bound at residue His-152.

It belongs to the polypeptide deformylase family. Fe(2+) is required as a cofactor.

The enzyme catalyses N-terminal N-formyl-L-methionyl-[peptide] + H2O = N-terminal L-methionyl-[peptide] + formate. Removes the formyl group from the N-terminal Met of newly synthesized proteins. Requires at least a dipeptide for an efficient rate of reaction. N-terminal L-methionine is a prerequisite for activity but the enzyme has broad specificity at other positions. The chain is Peptide deformylase 1 from Burkholderia multivorans (strain ATCC 17616 / 249).